The chain runs to 605 residues: Aspartate--tRNA(Asp/Asn) ligase (605 aa).

An L-aspartate-binding site is contributed by Glu-183. The interval 207 to 210 (QLYK) is aspartate. Arg-229 serves as a coordination point for L-aspartate. Residues 229–231 (RDE) and Gln-238 contribute to the ATP site. His-456 is an L-aspartate binding site. Glu-490 is a binding site for ATP. Position 497 (Arg-497) interacts with L-aspartate. 542-545 (GLDR) contacts ATP.

The protein belongs to the class-II aminoacyl-tRNA synthetase family. Type 1 subfamily. As to quaternary structure, homodimer.

Its subcellular location is the cytoplasm. It carries out the reaction tRNA(Asx) + L-aspartate + ATP = L-aspartyl-tRNA(Asx) + AMP + diphosphate. Its function is as follows. Aspartyl-tRNA synthetase with relaxed tRNA specificity since it is able to aspartylate not only its cognate tRNA(Asp) but also tRNA(Asn). Reaction proceeds in two steps: L-aspartate is first activated by ATP to form Asp-AMP and then transferred to the acceptor end of tRNA(Asp/Asn). The polypeptide is Aspartate--tRNA(Asp/Asn) ligase (Heliobacterium modesticaldum (strain ATCC 51547 / Ice1)).